Consider the following 476-residue polypeptide: Protein EARLY HEADING DATE 2 (476 aa).

Residues 1-13 (MLLSDLSSDQEAT) are compositionally biased toward polar residues. The interval 1-27 (MLLSDLSSDQEATGSNSHGGGGGGDRM) is disordered. C2H2-type zinc fingers lie at residues 106-128 (FVCE…RRGH) and 156-186 (YVCP…SRKH). 2 short sequence motifs (nuclear localization signal) span residues 124–131 (HRRGHNLP) and 178–185 (IKKHFSRK). A C2H2-type 2; degenerate zinc finger spans residues 191–214 (WRCERCGKRYAVHSDWKAHVKNCG). Zn(2+)-binding residues include C193, C196, H209, C213, C220, C222, H235, and C239. A CCHC-type 2; atypical zinc finger spans residues 218-241 (YRCDCGILFSRKDSLLTHRAFCDA). The segment at 228 to 240 (RKDSLLTHRAFCD) is SHR-binding.

The protein localises to the nucleus. Transcription activator that acts as a flowering master switch in both long and short days, independently of the circadian clock. Promotes flowering upstream of HD1 by up-regulating FTL1, FTL4, FTL5, FTL6, EHD1, HD3A and RFT1. Seems to repress FTL11 expression. May recognize the consensus motif 5'-TTTGTCGTAAT-3' in target gene promoters. In Oryza sativa subsp. indica (Rice), this protein is Protein EARLY HEADING DATE 2.